A 446-amino-acid polypeptide reads, in one-letter code: Glutamine synthetase (446 aa).

In terms of domain architecture, GS beta-grasp spans 15-103 (ENVKFLRLQI…LICDVYYPDG (89 aa)). The GS catalytic domain maps to 110-446 (PRYVLKRQIE…WELDRYLATY (337 aa)). 2 residues coordinate Mg(2+): glutamate 134 and glutamate 136. Residue glutamate 186 coordinates ATP. Mg(2+)-binding residues include glutamate 191 and glutamate 198. Residues 242–243 (NG) and glycine 243 each bind L-glutamate. Histidine 247 contributes to the Mg(2+) binding site. Residue serine 251 participates in ATP binding. L-glutamate is bound by residues arginine 300, glutamate 306, and arginine 318. Arginine 318 and arginine 323 together coordinate ATP. Glutamate 335 contacts Mg(2+). Arginine 337 contributes to the L-glutamate binding site.

This sequence belongs to the glutamine synthetase family. Interacts with GCBP (TTHA1554). Requires Mg(2+) as cofactor.

The protein localises to the cytoplasm. The catalysed reaction is L-glutamate + NH4(+) + ATP = L-glutamine + ADP + phosphate + H(+). Its activity is regulated as follows. Activity increases by approximately two-fold in the presence of GCBP. Catalyzes the ATP-dependent biosynthesis of glutamine from glutamate and ammonia. The sequence is that of Glutamine synthetase from Thermus thermophilus (strain ATCC 27634 / DSM 579 / HB8).